Here is a 128-residue protein sequence, read N- to C-terminus: Small ribosomal subunit protein uS11 (128 aa).

The protein belongs to the universal ribosomal protein uS11 family. In terms of assembly, part of the 30S ribosomal subunit. Interacts with proteins S7 and S18. Binds to IF-3.

In terms of biological role, located on the platform of the 30S subunit, it bridges several disparate RNA helices of the 16S rRNA. Forms part of the Shine-Dalgarno cleft in the 70S ribosome. This Chromohalobacter salexigens (strain ATCC BAA-138 / DSM 3043 / CIP 106854 / NCIMB 13768 / 1H11) protein is Small ribosomal subunit protein uS11.